A 197-amino-acid chain; its full sequence is Imidazoleglycerol-phosphate dehydratase (197 aa).

It belongs to the imidazoleglycerol-phosphate dehydratase family.

The protein resides in the cytoplasm. It catalyses the reaction D-erythro-1-(imidazol-4-yl)glycerol 3-phosphate = 3-(imidazol-4-yl)-2-oxopropyl phosphate + H2O. The protein operates within amino-acid biosynthesis; L-histidine biosynthesis; L-histidine from 5-phospho-alpha-D-ribose 1-diphosphate: step 6/9. This is Imidazoleglycerol-phosphate dehydratase from Nitrobacter hamburgensis (strain DSM 10229 / NCIMB 13809 / X14).